A 269-amino-acid polypeptide reads, in one-letter code: Thiazole synthase (269 aa).

Lys-105 functions as the Schiff-base intermediate with DXP in the catalytic mechanism. Residues Gly-166, 192–193 (AG), and 214–215 (NT) each bind 1-deoxy-D-xylulose 5-phosphate. Residues 245–269 (AMSAQDAAQPSTPVLGTPFWHHDHG) are disordered.

It belongs to the ThiG family. As to quaternary structure, homotetramer. Forms heterodimers with either ThiH or ThiS.

It localises to the cytoplasm. It catalyses the reaction [ThiS sulfur-carrier protein]-C-terminal-Gly-aminoethanethioate + 2-iminoacetate + 1-deoxy-D-xylulose 5-phosphate = [ThiS sulfur-carrier protein]-C-terminal Gly-Gly + 2-[(2R,5Z)-2-carboxy-4-methylthiazol-5(2H)-ylidene]ethyl phosphate + 2 H2O + H(+). The protein operates within cofactor biosynthesis; thiamine diphosphate biosynthesis. Functionally, catalyzes the rearrangement of 1-deoxy-D-xylulose 5-phosphate (DXP) to produce the thiazole phosphate moiety of thiamine. Sulfur is provided by the thiocarboxylate moiety of the carrier protein ThiS. In vitro, sulfur can be provided by H(2)S. The protein is Thiazole synthase of Paracidovorax citrulli (strain AAC00-1) (Acidovorax citrulli).